Consider the following 335-residue polypeptide: Ferredoxin--NADP reductase (335 aa).

FAD is bound by residues D35, Q43, Y48, A88, F122, D287, and S328.

The protein belongs to the ferredoxin--NADP reductase type 2 family. As to quaternary structure, homodimer. The cofactor is FAD.

The catalysed reaction is 2 reduced [2Fe-2S]-[ferredoxin] + NADP(+) + H(+) = 2 oxidized [2Fe-2S]-[ferredoxin] + NADPH. This is Ferredoxin--NADP reductase from Thermus thermophilus (strain ATCC BAA-163 / DSM 7039 / HB27).